We begin with the raw amino-acid sequence, 1073 residues long: Activated Cdc42 kinase Ack (1073 aa).

Positions 88–110 (IGGGKQPSSKKQSSAARESSQGN) are disordered. In terms of domain architecture, Protein kinase spans 123–383 (ITMGLKLGDG…PTFAALKEYL (261 aa)). ATP contacts are provided by residues 129 to 137 (LGDGSFGVV) and K156. D250 (proton acceptor) is an active-site residue. Residues 386–446 (MSPPVMRASR…PRNLLEQRKV (61 aa)) form the SH3 domain. Disordered regions lie at residues 484–506 (QRKC…SSKQ), 803–834 (PLKN…VEAA), and 862–882 (AQPP…HQQQ). A compositionally biased stretch (low complexity) spans 812-826 (SVHSNHSSPSSTASP). In terms of domain architecture, UBA spans 1029–1072 (GLATRHYKIDQLARLGVAGRPQCEQALQQTNWSLEVAAELLLNA).

The protein belongs to the protein kinase superfamily. Tyr protein kinase family. Interacts with yki and ex. Interacts with drk. Likely to be a member of an axonal guidance receptor complex that includes SH3PX1, dock and Dscam. Interacts (via N-terminus) with dock. Interacts with SH3PX1 (via SH3 domain). Mg(2+) serves as cofactor. Post-translationally, phosphorylated. Autophosphorylated. In terms of tissue distribution, detected in ovaries (at protein level). In adults, relatively higher expression in the head compared to the body.

It localises to the cytoplasm. The protein resides in the cytoplasmic vesicle. The protein localises to the clathrin-coated vesicle. The catalysed reaction is L-tyrosyl-[protein] + ATP = O-phospho-L-tyrosyl-[protein] + ADP + H(+). The enzyme catalyses L-threonyl-[protein] + ATP = O-phospho-L-threonyl-[protein] + ADP + H(+). Its function is as follows. Non-receptor tyrosine-protein and serine/threonine-protein kinase that is implicated in diverse biological functions such as cell survival, cell differentiation, cell growth and proliferation. Phosphorylates SH3PX1 and ex. Phosphorylates SH3PX1 predominantly on 'Tyr-56', which likely promotes the recruitment of SH3PX1 to an axonal guidance receptor complex that includes dock and Dscam; because phosphorylation of SH3PX1 increases its interaction with the complex member dock while decreasing its interaction with the actin cytoskeleton modulator WASp. In the wing and eye, promotes tissue growth, and during embryogenesis coordinates cell shape changes required for correct dorsal closure. Functions in the negative regulation of the Hippo/SWH (Sav/Wts/Hpo) signaling pathway by enhancing yki activity thereby promoting cell proliferation and inhibiting apoptosis. This is accomplished, at least in part, by phosphorylating ex thereby reducing its ability to efficiently activate the Hippo signaling cascade. In the eye disk, wing disk and possibly spermatids, inhibits programmed cell death induced by hid and rpr through a mechanism that is independent of the MAP kinase signal transduction pathway. Essential for male and female fertility. During oogenesis required for the correct temporal assembly, and consequently the catalytic activity of long Ctps filaments (cytoophidium) in the germline nurse cells, likely by phosphorylating an unidentified substrate that is essential for linking individual Ctps filaments into large, catalytically active assemblies. In Drosophila melanogaster (Fruit fly), this protein is Activated Cdc42 kinase Ack.